The primary structure comprises 140 residues: Small ribosomal subunit protein uS11c (140 aa).

Belongs to the universal ribosomal protein uS11 family. Part of the 30S ribosomal subunit.

The protein localises to the plastid. Its subcellular location is the chloroplast. The protein is Small ribosomal subunit protein uS11c of Pelargonium hortorum (Common geranium).